The sequence spans 312 residues: uncharacterized protein (312 aa).

The next 10 membrane-spanning stretches (helical) occupy residues 13–33 (AAGT…SIWI), 45–65 (AVLL…FLIY), 81–101 (ACGA…IGLN), 105–125 (AMVE…FTAC), 133–153 (IQDL…LGGW), 162–182 (MIGA…LVLS), 198–218 (GMTA…AAGM), 229–249 (MYGL…VLML), 260–280 (AAAI…LFLG), and 283–303 (LGLI…GMEY). Residues 173 to 303 (AVYAGYLVLS…VFFVITGMEY (131 aa)) form the EamA domain.

Belongs to the EamA transporter family.

It localises to the cell membrane. This is an uncharacterized protein from Bacillus subtilis (strain 168).